The following is a 272-amino-acid chain: Alkaline ceramidase (272 aa).

2 helical membrane-spanning segments follow: residues 34–54 (FANTCTNLPIIVLPLVNIMLL) and 61–81 (VNGGLVFPQLLLTFNGLASTY). Residue His83 participates in Zn(2+) binding. Transmembrane regions (helical) follow at residues 96–116 (LSLVWIITVFLVVYIPVMKWF), 124–144 (LTVVRWVVLIVTAVVSALCFL), 148–168 (LNAIALMLFSIPAAVVIRYEG), and 183–203 (ILALWGVAFSFWFADRLLCDF). His213 and His217 together coordinate Zn(2+). The chain crosses the membrane as a helical span at residues 214 to 234 (ALFHLLAGLAGYTIFIMFSMI). An N-linked (GlcNAc...) asparagine glycan is attached at Asn256.

It belongs to the alkaline ceramidase family. Zn(2+) is required as a cofactor.

The protein resides in the membrane. The enzyme catalyses an N-acylsphing-4-enine + H2O = sphing-4-enine + a fatty acid. Hydrolyzes the sphingolipid ceramide into sphingosine and free fatty acid. The protein is Alkaline ceramidase of Caenorhabditis briggsae.